We begin with the raw amino-acid sequence, 309 residues long: Voltage-dependent anion channel-forming protein mll4386 (309 aa).

3 helical membrane-spanning segments follow: residues 32–52 (ILPQ…LARW), 58–78 (GVFN…YLSF), and 227–247 (IVCL…TPLF).

This sequence belongs to the anion channel-forming bestrophin (TC 1.A.46) family.

It is found in the cell membrane. This Mesorhizobium japonicum (strain LMG 29417 / CECT 9101 / MAFF 303099) (Mesorhizobium loti (strain MAFF 303099)) protein is Voltage-dependent anion channel-forming protein mll4386.